Consider the following 166-residue polypeptide: Lipoprotein signal peptidase (166 aa).

4 helical membrane-spanning segments follow: residues 9 to 29 (ASGA…FDQL), 45 to 65 (ALTS…FGFL), 71 to 91 (WQRW…CYLL), and 99 to 119 (LFSL…IDRL). Residues aspartate 126 and aspartate 144 contribute to the active site. A helical transmembrane segment spans residues 135 to 155 (WHFPAFNLADSAITVGAVLLI).

It belongs to the peptidase A8 family.

Its subcellular location is the cell inner membrane. It carries out the reaction Release of signal peptides from bacterial membrane prolipoproteins. Hydrolyzes -Xaa-Yaa-Zaa-|-(S,diacylglyceryl)Cys-, in which Xaa is hydrophobic (preferably Leu), and Yaa (Ala or Ser) and Zaa (Gly or Ala) have small, neutral side chains.. It functions in the pathway protein modification; lipoprotein biosynthesis (signal peptide cleavage). In terms of biological role, this protein specifically catalyzes the removal of signal peptides from prolipoproteins. The sequence is that of Lipoprotein signal peptidase from Burkholderia vietnamiensis (strain G4 / LMG 22486) (Burkholderia cepacia (strain R1808)).